The primary structure comprises 471 residues: MTMKPVIALVGRPNVGKSTLFNRLTRTRDALVADFPGLTRDRKYGDGQLGGYLYTVVDTGGIGENDDGIDVPMTSQSLQAVGEADVVLFMVDGRAGLTAADEQIASELRKLPKPTYLIVNKTDGVDADSAMSEFFALGLTEVLPIAAAHGRGVTSMIEHILEGFTDLELLPEGEHRTSKKPGEDSIRVAVLGRPNVGKSTLINRMLGEERVVVFDHAGTTRDSIEVPFERMGRAYTLIDTAGVRRRGKVFEMVEKFSVIKALQAMEAAQVVVVVIDAREGITDQDLHLLGYALDSGRALMIAVNKWDGLEADHKERVRVNLGRRLEFAPWVKIKFISALHGTGVGDLWGMVEQAWDSAFIKIGTNELTRMMEEITNGHPPPRNGRFRAKLRYAHLGGNNPPTLVLHGNRTEALPTSYKKFLENRFRELLKLEGTPIRLEFKSGTNPYEGRKNVLTDRQVHKRKRMIKRMKK.

EngA-type G domains follow at residues 5-168 (PVIA…TDLE) and 186-359 (IRVA…DSAF). Residues 11 to 18 (GRPNVGKS), 58 to 62 (DTGGI), 120 to 123 (NKTD), 192 to 199 (GRPNVGKS), 239 to 243 (DTAGV), and 304 to 307 (NKWD) each bind GTP. A KH-like domain is found at 360-444 (IKIGTNELTR…PIRLEFKSGT (85 aa)).

The protein belongs to the TRAFAC class TrmE-Era-EngA-EngB-Septin-like GTPase superfamily. EngA (Der) GTPase family. As to quaternary structure, associates with the 50S ribosomal subunit.

Functionally, GTPase that plays an essential role in the late steps of ribosome biogenesis. This is GTPase Der from Alcanivorax borkumensis (strain ATCC 700651 / DSM 11573 / NCIMB 13689 / SK2).